Consider the following 285-residue polypeptide: Foldase protein PrsA 2 (285 aa).

The signal sequence occupies residues 1-20; sequence MRGKHIFIITALISILMLSA. Cysteine 21 carries N-palmitoyl cysteine lipidation. Cysteine 21 is lipidated: S-diacylglycerol cysteine. Residues 134–224 form the PpiC domain; it reads KPEIKASHIL…NGYHVIKLTD (91 aa).

This sequence belongs to the PrsA family.

The protein localises to the cell membrane. The catalysed reaction is [protein]-peptidylproline (omega=180) = [protein]-peptidylproline (omega=0). Plays a major role in protein secretion by helping the post-translocational extracellular folding of several secreted proteins. The sequence is that of Foldase protein PrsA 2 (prsA2) from Bacillus cereus (strain ATCC 14579 / DSM 31 / CCUG 7414 / JCM 2152 / NBRC 15305 / NCIMB 9373 / NCTC 2599 / NRRL B-3711).